A 1208-amino-acid chain; its full sequence is Period circadian protein (1208 aa).

Disordered regions lie at residues 1–171 (MEGG…AAQS) and 214–235 (GPGKVEPVPGVPGTAAAGTGQR). Residues 16–47 (SDSAYSNSCSNSQSQRSGSSKSRLSGSHSSGS) show a composition bias toward low complexity. The Nuclear localization signal signature appears at 66-79 (KRNKDKSRKKKKNK). The span at 66–79 (KRNKDKSRKKKKNK) shows a compositional bias: basic residues. 2 stretches are compositionally biased toward basic and acidic residues: residues 129–139 (QHGEDHSEPKA) and 147–164 (EGDRSGSESEAERVENAA). The span at 217 to 232 (KVEPVPGVPGTAAAGT) shows a compositional bias: low complexity. 2 consecutive PAS domains span residues 242-377 (ESFC…ATPI) and 395-501 (FAIR…RVFQ). Disordered regions lie at residues 636–747 (VTAP…SSNY), 802–821 (EYSGPGHGIKRGGSHSWEGE), 961–982 (TSPTRSPRMHKHPHKGGPEMPT), and 1076–1208 (VTTP…HGDG). The span at 679–697 (NFTTASNIHMSSVTNTSIA) shows a compositional bias: polar residues. Repeat copies occupy residues 698 to 699 (GT), 701 to 702 (GT), 703 to 704 (GT), 705 to 706 (GT), 707 to 708 (GT), 709 to 710 (GT), 711 to 712 (GT), 713 to 714 (GT), 715 to 716 (GT), 717 to 718 (GT), 719 to 720 (GT), 721 to 722 (GT), 723 to 724 (GT), 725 to 726 (GT), 727 to 728 (GT), 729 to 730 (GT), and 731 to 732 (GN). A compositionally biased stretch (gly residues) spans 698 to 740 (GTGGTGTGTGTGTGTGTGTGTGTGTGTGTGTGTGNGTNSGTGT). Residues 698 to 742 (GTGGTGTGTGTGTGTGTGTGTGTGTGTGTGTGTGNGTNSGTGTGS) form a 21 X 2 AA approximate tandem repeats of G-[TN] region. The stretch at 734 to 735 (TN) is one 18; approximate repeat. Repeat copies occupy residues 737–738 (GT) and 739–740 (GT). The 21; approximate repeat unit spans residues 741 to 742 (GS). Residues 1076 to 1092 (VTTPSQVQRSSSQSASV) are compositionally biased toward low complexity. Residues 1127-1138 (LPCSSSNPANNK) are compositionally biased toward polar residues. A compositionally biased stretch (low complexity) spans 1142-1161 (DSNGNSDDMDGSSFSSFYSS). The segment covering 1193 to 1208 (KIMEHPEEDQTQHGDG) has biased composition (basic and acidic residues).

Forms a heterodimer with timeless (TIM); the complex then translocates into the nucleus. In terms of processing, phosphorylated with a circadian rhythmicity, probably by the double-time protein (dbt). Phosphorylation could be implicated in the stability of per monomer and in the formation of heterodimer per-tim.

It is found in the nucleus. Its subcellular location is the cytoplasm. The protein resides in the perinuclear region. Essential for biological clock functions. Determines the period length of circadian and ultradian rhythms; an increase in PER dosage leads to shortened circadian rhythms and a decrease leads to lengthened circadian rhythms. Essential for the circadian rhythmicity of locomotor activity, eclosion behavior, and for the rhythmic component of the male courtship song that originates in the thoracic nervous system. The biological cycle depends on the rhythmic formation and nuclear localization of the TIM-PER complex. Light induces the degradation of TIM, which promotes elimination of PER. Nuclear activity of the heterodimer coordinatively regulates PER and TIM transcription through a negative feedback loop. Behaves as a negative element in circadian transcriptional loop. Does not appear to bind DNA, suggesting indirect transcriptional inhibition. The protein is Period circadian protein (per) of Drosophila yakuba (Fruit fly).